Here is a 548-residue protein sequence, read N- to C-terminus: Phenylalanine--tRNA ligase beta subunit (548 aa).

A B5 domain is found at 275–350 (LKEDVLETTS…IAYGYNKFSG (76 aa)). Asp328, Asp334, Glu337, and Glu338 together coordinate Mg(2+).

The protein belongs to the phenylalanyl-tRNA synthetase beta subunit family. Type 2 subfamily. Tetramer of two alpha and two beta subunits. Mg(2+) serves as cofactor.

The protein localises to the cytoplasm. The catalysed reaction is tRNA(Phe) + L-phenylalanine + ATP = L-phenylalanyl-tRNA(Phe) + AMP + diphosphate + H(+). This is Phenylalanine--tRNA ligase beta subunit from Methanocaldococcus jannaschii (strain ATCC 43067 / DSM 2661 / JAL-1 / JCM 10045 / NBRC 100440) (Methanococcus jannaschii).